An 853-amino-acid polypeptide reads, in one-letter code: Aryl hydrocarbon receptor (853 aa).

Residues 1 to 9 constitute a propeptide that is removed on maturation; it reads MSSGANITY. The segment at 1–38 is disordered; sequence MSSGANITYASRKRRKPVQKTVKPVPAEGIKSNPSKRH. Short sequence motifs (nuclear localization signal) lie at residues 12–15 and 36–41; these read RKRR and KRHRDR. The bHLH domain maps to 26–79; it reads PAEGIKSNPSKRHRDRLNTELDRLASLLPFPQDVINKLDKLSVLRLSVSYLRAK. Residues 37–65 form a DNA-binding region; it reads RHRDRLNTELDRLASLLPFPQDVINKLDK. Required for maintaining the overall integrity of the AHR:ARNT heterodimer and its transcriptional activity regions lie at residues 49-81, 116-124, and 264-266; these read LASLLPFPQDVINKLDKLSVLRLSVSYLRAKSF, LLQALNGFV, and FAI. A Nuclear export signal motif is present at residues 63–71; sequence LDKLSVLRL. Residues 116–179 form the PAS 1 domain; sequence LLQALNGFVL…RQLHWALNPS (64 aa). Positions 273 to 340 constitute a PAS 2 domain; the sequence is PSILEIRTKN…CAESHIRMIK (68 aa). Positions 346-384 constitute a PAC domain; sequence MTVFRLLAKHSRWRWVQSNARLIYRNGRPDYIIATQRPL. Positions 429–451 are disordered; sequence TKSNTSRKDWAPQSTPSKDSFHP. Positions 440–451 are enriched in polar residues; that stretch reads PQSTPSKDSFHP.

As to quaternary structure, homodimer. Heterodimer; efficient DNA binding requires dimerization with another bHLH protein. Interacts with ARNT; the heterodimer ARNT:AHR binds to core DNA sequence 5'-TGCGTG-3' within the dioxin response element (DRE) of target gene promoters and activates their transcription. Binds MYBBP1A. Interacts with coactivators including SRC-1, RIP140 and NOCA7, and with the corepressor SMRT. Interacts with NEDD8 and IVNS1ABP. Interacts with BMAL1. Interacts with HSP90AB1. Interacts with TIPARP; leading to mono-ADP-ribosylation of AHR and subsequent inhibition of AHR. In terms of processing, mono-ADP-ribosylated, leading to inhibit transcription activator activity of AHR. As to expression, expressed in all tissues tested including brain, heart, kidney, liver, lung, spleen, skeletal muscle and thymus.

The protein localises to the cytoplasm. It is found in the nucleus. Ligand-activated transcription factor that enables cells to adapt to changing conditions by sensing compounds from the environment, diet, microbiome and cellular metabolism, and which plays important roles in development, immunity and cancer. Upon ligand binding, translocates into the nucleus, where it heterodimerizes with ARNT and induces transcription by binding to xenobiotic response elements (XRE). Regulates a variety of biological processes, including angiogenesis, hematopoiesis, drug and lipid metabolism, cell motility and immune modulation. Xenobiotics can act as ligands: upon xenobiotic-binding, activates the expression of multiple phase I and II xenobiotic chemical metabolizing enzyme genes (such as the CYP1A1 gene). Mediates biochemical and toxic effects of halogenated aromatic hydrocarbons. Next to xenobiotics, natural ligands derived from plants, microbiota, and endogenous metabolism are potent AHR agonists. Tryptophan (Trp) derivatives constitute an important class of endogenous AHR ligands. Acts as a negative regulator of anti-tumor immunity: indoles and kynurenic acid generated by Trp catabolism act as ligand and activate AHR, thereby promoting AHR-driven cancer cell motility and suppressing adaptive immunity. Regulates the circadian clock by inhibiting the basal and circadian expression of the core circadian component PER1. Inhibits PER1 by repressing the CLOCK-BMAL1 heterodimer mediated transcriptional activation of PER1. The heterodimer ARNT:AHR binds to core DNA sequence 5'-TGCGTG-3' within the dioxin response element (DRE) of target gene promoters and activates their transcription. The protein is Aryl hydrocarbon receptor (Ahr) of Rattus norvegicus (Rat).